The sequence spans 150 residues: Transcriptional repressor NrdR (150 aa).

A zinc finger spans residues 3–34 (CPFCQHDHSKVIDSRVIDAGSAIRRRRECSKC). The region spanning 46 to 136 (LLVVKRNGVT…VYKSFDSADD (91 aa)) is the ATP-cone domain.

Belongs to the NrdR family. Zn(2+) serves as cofactor.

In terms of biological role, negatively regulates transcription of bacterial ribonucleotide reductase nrd genes and operons by binding to NrdR-boxes. The protein is Transcriptional repressor NrdR of Corynebacterium glutamicum (strain ATCC 13032 / DSM 20300 / JCM 1318 / BCRC 11384 / CCUG 27702 / LMG 3730 / NBRC 12168 / NCIMB 10025 / NRRL B-2784 / 534).